The primary structure comprises 564 residues: NAD-dependent malic enzyme (564 aa).

The active-site Proton donor is the Y104. R157 is an NAD(+) binding site. The active-site Proton acceptor is K175. A divalent metal cation contacts are provided by E246, D247, and D270. Residues D270 and N417 each contribute to the NAD(+) site.

It belongs to the malic enzymes family. As to quaternary structure, homotetramer. Requires Mg(2+) as cofactor. It depends on Mn(2+) as a cofactor.

It carries out the reaction (S)-malate + NAD(+) = pyruvate + CO2 + NADH. The enzyme catalyses oxaloacetate + H(+) = pyruvate + CO2. This Aeromonas salmonicida (strain A449) protein is NAD-dependent malic enzyme.